The primary structure comprises 343 residues: MSDDFEVVRPEEQAGDEKDRDLRPRSLVDFQGQTKAKENLSVFIKAARERGESLDHLFLIGPPGLGKTTLAQITANELGVDFKVTGAPALDKPKDLAGILTTLTERSVFFIDEIHRLKPAIEEMLYIAMEDYELDWIIGQGPGARTVRIPIPPFTLVGATTRAGMVSSPLISRFGIVQRFEFYSHEELASIISRSASILEIEIEKKAAIALARCSRGTPRVANRLLRRMRDFAQVAGKSSIDEMTVAAGLKQLNIDGLGLETYDRQILRSIIENYSGGPVGAETLAISIGESQDTLEDYYEPYLIQSGLLQRTPRGRMVTLKAYEHLGLNPPKLGDGQEGLFD.

The interval 1 to 23 (MSDDFEVVRPEEQAGDEKDRDLR) is disordered. The tract at residues 1-183 (MSDDFEVVRP…FGIVQRFEFY (183 aa)) is large ATPase domain (RuvB-L). Residues Leu22, Arg23, Gly64, Lys67, Thr68, Thr69, 130 to 132 (EDY), Arg173, Tyr183, and Arg220 contribute to the ATP site. Thr68 contributes to the Mg(2+) binding site. The small ATPAse domain (RuvB-S) stretch occupies residues 184–254 (SHEELASIIS…TVAAGLKQLN (71 aa)). The segment at 257–343 (GLGLETYDRQ…LGDGQEGLFD (87 aa)) is head domain (RuvB-H). 2 residues coordinate DNA: Arg312 and Arg317.

The protein belongs to the RuvB family. In terms of assembly, homohexamer. Forms an RuvA(8)-RuvB(12)-Holliday junction (HJ) complex. HJ DNA is sandwiched between 2 RuvA tetramers; dsDNA enters through RuvA and exits via RuvB. An RuvB hexamer assembles on each DNA strand where it exits the tetramer. Each RuvB hexamer is contacted by two RuvA subunits (via domain III) on 2 adjacent RuvB subunits; this complex drives branch migration. In the full resolvosome a probable DNA-RuvA(4)-RuvB(12)-RuvC(2) complex forms which resolves the HJ.

The protein localises to the cytoplasm. The catalysed reaction is ATP + H2O = ADP + phosphate + H(+). In terms of biological role, the RuvA-RuvB-RuvC complex processes Holliday junction (HJ) DNA during genetic recombination and DNA repair, while the RuvA-RuvB complex plays an important role in the rescue of blocked DNA replication forks via replication fork reversal (RFR). RuvA specifically binds to HJ cruciform DNA, conferring on it an open structure. The RuvB hexamer acts as an ATP-dependent pump, pulling dsDNA into and through the RuvAB complex. RuvB forms 2 homohexamers on either side of HJ DNA bound by 1 or 2 RuvA tetramers; 4 subunits per hexamer contact DNA at a time. Coordinated motions by a converter formed by DNA-disengaged RuvB subunits stimulates ATP hydrolysis and nucleotide exchange. Immobilization of the converter enables RuvB to convert the ATP-contained energy into a lever motion, pulling 2 nucleotides of DNA out of the RuvA tetramer per ATP hydrolyzed, thus driving DNA branch migration. The RuvB motors rotate together with the DNA substrate, which together with the progressing nucleotide cycle form the mechanistic basis for DNA recombination by continuous HJ branch migration. Branch migration allows RuvC to scan DNA until it finds its consensus sequence, where it cleaves and resolves cruciform DNA. The protein is Holliday junction branch migration complex subunit RuvB of Treponema denticola (strain ATCC 35405 / DSM 14222 / CIP 103919 / JCM 8153 / KCTC 15104).